Consider the following 516-residue polypeptide: Probable inactive beta-glucosidase 14 (516 aa).

Residues 1–23 (MAAAWLVVLLTVHRLLHLSGVSA) form the signal peptide. A beta-D-glucoside contacts are provided by residues Q43, H145, and 190 to 191 (NQ). The N-linked (GlcNAc...) asparagine glycan is linked to N193. Residues C210 and C217 are joined by a disulfide bond. N-linked (GlcNAc...) asparagine glycans are attached at residues N221 and N270. A beta-D-glucoside is bound at residue Y334. C342 and C347 are oxidised to a cystine. E405 lines the a beta-D-glucoside pocket. E405 functions as the Nucleophile in the catalytic mechanism. Residues N415 and N423 are each glycosylated (N-linked (GlcNAc...) asparagine). A beta-D-glucoside is bound by residues W454, 461–462 (EW), and F470.

It belongs to the glycosyl hydrolase 1 family. Expressed in flowers and endosperm.

The polypeptide is Probable inactive beta-glucosidase 14 (Oryza sativa subsp. japonica (Rice)).